The chain runs to 400 residues: MSAFRTLDDAGSLKGKRVLMRVDLNVPMESGRVTDATRIERVAPTIREVAEQGAKVILLAHFGRPKGKREPKDSLEPVVPALGAALGRDVAFAADCVGDAAAQAVAALKDGDVLLLENTRYHAGEEKNDAAFADALAANGDVYVNEAFSAAHRAHASTEGLAHRLPAYAGREMQAELDALTKGLESPQRPVIALVGGAKVSSKIDLLENLVAKVDMLVIGGGMANTFLHAQGKAVGKSLCEKDLAETATRILAAAEKAGCRIILPVDAVAASEFKARAPHETVPVDAVPDASMILDAGPRSVAEINAAIDGAKTLVWNGPLGAFELAPFDAATVATAKHAAARTKDGQLVSVAGGGDTVAALNHAGVGQDFTYVSTAGGAFLEWLEGKALPGVEALRAKG.

Residues 23-25, Arg-38, 61-64, Arg-120, and Arg-153 each bind substrate; these read DLN and HFGR. Residues Lys-203, Glu-325, and 355–358 each bind ATP; that span reads GGDT.

This sequence belongs to the phosphoglycerate kinase family. Monomer.

Its subcellular location is the cytoplasm. It catalyses the reaction (2R)-3-phosphoglycerate + ATP = (2R)-3-phospho-glyceroyl phosphate + ADP. Its pathway is carbohydrate degradation; glycolysis; pyruvate from D-glyceraldehyde 3-phosphate: step 2/5. This Methylobacterium radiotolerans (strain ATCC 27329 / DSM 1819 / JCM 2831 / NBRC 15690 / NCIMB 10815 / 0-1) protein is Phosphoglycerate kinase.